Here is a 357-residue protein sequence, read N- to C-terminus: 3-isopropylmalate dehydrogenase (357 aa).

Substrate is bound by residues arginine 97, arginine 107, arginine 135, and aspartate 224. Positions 224, 248, and 252 each coordinate Mg(2+). 282–294 (GSAPDIAGKNIAN) is a binding site for NAD(+).

This sequence belongs to the isocitrate and isopropylmalate dehydrogenases family. LeuB type 1 subfamily. As to quaternary structure, homodimer. It depends on Mg(2+) as a cofactor. The cofactor is Mn(2+).

The protein resides in the cytoplasm. The catalysed reaction is (2R,3S)-3-isopropylmalate + NAD(+) = 4-methyl-2-oxopentanoate + CO2 + NADH. Its pathway is amino-acid biosynthesis; L-leucine biosynthesis; L-leucine from 3-methyl-2-oxobutanoate: step 3/4. In terms of biological role, catalyzes the oxidation of 3-carboxy-2-hydroxy-4-methylpentanoate (3-isopropylmalate) to 3-carboxy-4-methyl-2-oxopentanoate. The product decarboxylates to 4-methyl-2 oxopentanoate. This Prochlorococcus marinus subsp. pastoris (strain CCMP1986 / NIES-2087 / MED4) protein is 3-isopropylmalate dehydrogenase.